Here is a 99-residue protein sequence, read N- to C-terminus: Large ribosomal subunit protein eL21 (99 aa).

The segment covering 1–14 (MPNSNGPLSNSGGK) has biased composition (polar residues). Positions 1–38 (MPNSNGPLSNSGGKLQNDPRDRGTSPPQRAIADYDDGE) are disordered.

Belongs to the eukaryotic ribosomal protein eL21 family.

The polypeptide is Large ribosomal subunit protein eL21 (Halobacterium salinarum (strain ATCC 29341 / DSM 671 / R1)).